A 299-amino-acid polypeptide reads, in one-letter code: uncharacterized protein (299 aa).

Residues 4 to 20 (LFFIFVMLIVLLCGCTS) form a helical membrane-spanning segment.

It is found in the membrane. This is an uncharacterized protein from Methanocaldococcus jannaschii (strain ATCC 43067 / DSM 2661 / JAL-1 / JCM 10045 / NBRC 100440) (Methanococcus jannaschii).